A 1129-amino-acid polypeptide reads, in one-letter code: Nuclear pore complex protein 15 (1129 aa).

Belongs to the nucleoporin Nup133 family.

It localises to the nucleus envelope. The protein localises to the nucleus. The protein resides in the nuclear pore complex. Important for early nematode development. This Caenorhabditis elegans protein is Nuclear pore complex protein 15.